The primary structure comprises 621 residues: 1-deoxy-D-xylulose-5-phosphate synthase (621 aa).

Residues His-80 and 121-123 each bind thiamine diphosphate; that span reads GHS. Asp-152 serves as a coordination point for Mg(2+). Residues 153 to 154, Asn-181, Tyr-288, and Glu-370 each bind thiamine diphosphate; that span reads GA. Asn-181 is a Mg(2+) binding site.

The protein belongs to the transketolase family. DXPS subfamily. Homodimer. The cofactor is Mg(2+). It depends on thiamine diphosphate as a cofactor.

The enzyme catalyses D-glyceraldehyde 3-phosphate + pyruvate + H(+) = 1-deoxy-D-xylulose 5-phosphate + CO2. Its pathway is metabolic intermediate biosynthesis; 1-deoxy-D-xylulose 5-phosphate biosynthesis; 1-deoxy-D-xylulose 5-phosphate from D-glyceraldehyde 3-phosphate and pyruvate: step 1/1. In terms of biological role, catalyzes the acyloin condensation reaction between C atoms 2 and 3 of pyruvate and glyceraldehyde 3-phosphate to yield 1-deoxy-D-xylulose-5-phosphate (DXP). In Serratia proteamaculans (strain 568), this protein is 1-deoxy-D-xylulose-5-phosphate synthase.